A 180-amino-acid polypeptide reads, in one-letter code: Large ribosomal subunit protein bL19 (180 aa).

Belongs to the bacterial ribosomal protein bL19 family.

This protein is located at the 30S-50S ribosomal subunit interface and may play a role in the structure and function of the aminoacyl-tRNA binding site. The protein is Large ribosomal subunit protein bL19 of Allorhizobium ampelinum (strain ATCC BAA-846 / DSM 112012 / S4) (Agrobacterium vitis (strain S4)).